Reading from the N-terminus, the 133-residue chain is MIKKYEACFLFKSEELEYKAALEEVKKQLTVFNASDFAENSLGERALEYPIRKQLRGRYEIIEFKMDSENLKELEIQLKLIKNLLRHMILVKINKKVSVKKVKRRNFREFKDNRDIKEKESSEFNSNVDVKVD.

Belongs to the bacterial ribosomal protein bS6 family.

In terms of biological role, binds together with bS18 to 16S ribosomal RNA. In Borrelia turicatae (strain 91E135), this protein is Small ribosomal subunit protein bS6.